The following is a 713-amino-acid chain: Metal transporter CNNM3 (713 aa).

The chain crosses the membrane as a helical span at residues alanine 7 to alanine 29. Asparagine 73 carries an N-linked (GlcNAc...) asparagine glycan. The region spanning glutamate 136–valine 314 is the CNNM transmembrane domain. Transmembrane regions (helical) follow at residues alanine 137–alanine 157, cysteine 199–leucine 219, alanine 227–alanine 247, and leucine 267–alanine 287. 2 consecutive CBS domains span residues leucine 324–leucine 385 and tyrosine 392–glutamate 458. The interval leucine 664–valine 713 is disordered. Serine 667 and serine 706 each carry phosphoserine.

This sequence belongs to the ACDP family. Widely expressed with highest levels in brain, kidney, liver, lung and heart.

It is found in the cell membrane. Its function is as follows. Probable metal transporter. This is Metal transporter CNNM3 (Cnnm3) from Mus musculus (Mouse).